The chain runs to 82 residues: Penaeidin-3a (82 aa).

The signal sequence occupies residues 1–19 (MRLVVCLVFLASFALVCQG). A Pyrrolidone carboxylic acid modification is found at Gln20. 3 disulfide bridges follow: Cys51-Cys66, Cys55-Cys73, and Cys67-Cys74. The residue at position 81 (Ser81) is a Serine amide.

The N-terminus forms pyrrolidone carboxylic acid. Higher expression in hemocytes and to a lesser extent in heart, testis, gills, intestine, lymphoid organ and hepatopancreas. Traces in eyes and subcuticular epithelium. Not present in the brain.

It localises to the cytoplasmic granule. Functionally, antibacterial activity against M.luteus and E.coli bacteria. Antifungal activity against N.crassa and F.oxysporum. Presents chitin-binding activity. The sequence is that of Penaeidin-3a from Penaeus vannamei (Whiteleg shrimp).